The primary structure comprises 1132 residues: Tyrosine-protein kinase JAK2 (1132 aa).

The tract at residues 1–239 is interaction with cytokine/interferon/growth hormone receptors; it reads MGMACLTMTE…RYRFRRFIQQ (239 aa). Residues 37 to 380 form the FERM domain; the sequence is PVLQVYLYHS…GYYRLTADAH (344 aa). The residue at position 119 (tyrosine 119) is a Phosphotyrosine; by autocatalysis. Phosphotyrosine is present on residues tyrosine 372 and tyrosine 373. The region spanning 401-482 is the SH2; atypical domain; it reads HGPISMDFAI…SLKDLLNCYQ (82 aa). Serine 523 is subject to Phosphoserine. Residues 545–809 enclose the Protein kinase 1 domain; it reads LIFNESLGQG…AVIRDLNSLF (265 aa). A phosphotyrosine mark is found at tyrosine 570 and tyrosine 813. A Protein kinase 2 domain is found at 849 to 1126; sequence LKFLQQLGKG…RDLSLRVDQI (278 aa). 855–863 lines the ATP pocket; sequence LGKGNFGSV. Tyrosine 868 carries the phosphotyrosine; by autocatalysis modification. Lysine 882 provides a ligand contact to ATP. Residues tyrosine 966 and tyrosine 972 each carry the phosphotyrosine; by autocatalysis modification. Aspartate 976 acts as the Proton acceptor in catalysis. 2 positions are modified to phosphotyrosine; by autocatalysis: tyrosine 1007 and tyrosine 1008.

Belongs to the protein kinase superfamily. Tyr protein kinase family. JAK subfamily. Interacts with IL23R, SKB1 and STAM2. Interacts with EPOR. Interacts with LYN. Interacts with SIRPA. Interacts with SH2B1. Interacts with TEC. Interacts with IFNGR2 (via intracellular domain). Interacts with LEPR (Isoform B). Interacts with HSP90AB1; promotes functional activation in a heat shock-dependent manner. Interacts with STRA6. Interacts with ASB2; the interaction targets JAK2 for Notch-induced proteasomal degradation. Mg(2+) serves as cofactor. Post-translationally, autophosphorylated, leading to regulate its activity. Leptin promotes phosphorylation on tyrosine residues, including phosphorylation on Tyr-813. Autophosphorylation on Tyr-119 in response to EPO down-regulates its kinase activity. Autophosphorylation on Tyr-868, Tyr-966 and Tyr-972 in response to growth hormone (GH) are required for maximal kinase activity. Also phosphorylated by TEC. Phosphorylated on tyrosine residues in response to interferon gamma signaling. Phosphorylated on tyrosine residues in response to a signaling cascade that is activated by increased cellular retinol. In terms of processing, undergoes Notch-induced ubiquitination and subsequent proteasomal degradation which is mediated by ASB1 or ASB2, the substrate-recognition components of probable ECS E3 ubiquitin-protein ligase complexes. As to expression, ubiquitously expressed throughout most tissues.

It is found in the endomembrane system. The protein resides in the cytoplasm. The protein localises to the nucleus. The enzyme catalyses L-tyrosyl-[protein] + ATP = O-phospho-L-tyrosyl-[protein] + ADP + H(+). With respect to regulation, regulated by autophosphorylation, can both activate or decrease activity. Heme regulates its activity by enhancing the phosphorylation on Tyr-1007 and Tyr-1008. Non-receptor tyrosine kinase involved in various processes such as cell growth, development, differentiation or histone modifications. Mediates essential signaling events in both innate and adaptive immunity. In the cytoplasm, plays a pivotal role in signal transduction via its association with type I receptors such as growth hormone (GHR), prolactin (PRLR), leptin (LEPR), erythropoietin (EPOR), thrombopoietin (THPO); or type II receptors including IFN-alpha, IFN-beta, IFN-gamma and multiple interleukins. Following ligand-binding to cell surface receptors, phosphorylates specific tyrosine residues on the cytoplasmic tails of the receptor, creating docking sites for STATs proteins. Subsequently, phosphorylates the STATs proteins once they are recruited to the receptor. Phosphorylated STATs then form homodimer or heterodimers and translocate to the nucleus to activate gene transcription. For example, cell stimulation with erythropoietin (EPO) during erythropoiesis leads to JAK2 autophosphorylation, activation, and its association with erythropoietin receptor (EPOR) that becomes phosphorylated in its cytoplasmic domain. Then, STAT5 (STAT5A or STAT5B) is recruited, phosphorylated and activated by JAK2. Once activated, dimerized STAT5 translocates into the nucleus and promotes the transcription of several essential genes involved in the modulation of erythropoiesis. Part of a signaling cascade that is activated by increased cellular retinol and that leads to the activation of STAT5 (STAT5A or STAT5B). In addition, JAK2 mediates angiotensin-2-induced ARHGEF1 phosphorylation. Plays a role in cell cycle by phosphorylating CDKN1B. Cooperates with TEC through reciprocal phosphorylation to mediate cytokine-driven activation of FOS transcription. In the nucleus, plays a key role in chromatin by specifically mediating phosphorylation of 'Tyr-41' of histone H3 (H3Y41ph), a specific tag that promotes exclusion of CBX5 (HP1 alpha) from chromatin. Up-regulates the potassium voltage-gated channel activity of KCNA3. The polypeptide is Tyrosine-protein kinase JAK2 (Rattus norvegicus (Rat)).